A 368-amino-acid chain; its full sequence is Putative alcohol dehydrogenase D (368 aa).

Positions 40, 61, 91, 94, 97, 105, and 167 each coordinate Zn(2+).

This sequence belongs to the zinc-containing alcohol dehydrogenase family. It depends on Zn(2+) as a cofactor.

The catalysed reaction is a primary alcohol + NAD(+) = an aldehyde + NADH + H(+). It catalyses the reaction a secondary alcohol + NAD(+) = a ketone + NADH + H(+). Its function is as follows. Required for maintaining the appropriate mycolic acid composition and permeability of the envelope on its exposure to acidic pH. The protein is Putative alcohol dehydrogenase D (adhD) of Mycobacterium tuberculosis (strain CDC 1551 / Oshkosh).